The chain runs to 69 residues: Small archaeal modifier protein 2 (69 aa).

Lysine 55 is covalently cross-linked (Glycyl lysine isopeptide (Lys-Gly) (interchain with G-Cter in SAMP2)). Glycine 69 bears the 1-thioglycine; alternate mark. Glycine 69 bears the Glycyl adenylate; alternate mark. Residue glycine 69 forms a Glycyl lysine isopeptide (Gly-Lys) (interchain with K-? in acceptor proteins); alternate linkage.

The C-terminal glycine is likely acyl-adenylated (-COAMP) by UbaA, and also probably thiocarboxylated (-COSH) to function in sulfur transfer.

In terms of biological role, functions as a protein modifier covalently attached to lysine residues of substrate proteins, as well as a sulfur carrier in tRNA thiolation. The protein modification process is termed sampylation and involves the formation of an isopeptide bond between the SAMP2 C-terminal glycine carboxylate and the epsilon-amino group of lysine residues on target proteins. Is able to form polymeric chains with itself likely at Lys-55, similar to ubiquitin and other ubiquitin-like proteins. May serve as a proteolytic signal in the cell to target proteins for degradation by proteasomes. The chain is Small archaeal modifier protein 2 from Pyrococcus furiosus (strain ATCC 43587 / DSM 3638 / JCM 8422 / Vc1).